A 43-amino-acid chain; its full sequence is Potassium channel toxin gamma-KTx 4.12 (43 aa).

4 disulfides stabilise this stretch: cysteine 5–cysteine 23, cysteine 11–cysteine 34, cysteine 20–cysteine 39, and cysteine 24–cysteine 41.

As to expression, expressed by the venom gland.

Its subcellular location is the secreted. Reversibly blocks Kv11/ERG potassium channels. Is less toxic than ergtoxin (AC Q86QT3). This chain is Potassium channel toxin gamma-KTx 4.12, found in Centruroides sculpturatus (Arizona bark scorpion).